A 197-amino-acid polypeptide reads, in one-letter code: Probable nicotinate-nucleotide adenylyltransferase (197 aa).

This sequence belongs to the NadD family.

The catalysed reaction is nicotinate beta-D-ribonucleotide + ATP + H(+) = deamido-NAD(+) + diphosphate. It functions in the pathway cofactor biosynthesis; NAD(+) biosynthesis; deamido-NAD(+) from nicotinate D-ribonucleotide: step 1/1. Catalyzes the reversible adenylation of nicotinate mononucleotide (NaMN) to nicotinic acid adenine dinucleotide (NaAD). This is Probable nicotinate-nucleotide adenylyltransferase from Bordetella avium (strain 197N).